Reading from the N-terminus, the 194-residue chain is 7-methyl-GTP pyrophosphatase (194 aa).

The active-site Proton acceptor is the Asp-69.

This sequence belongs to the Maf family. YceF subfamily. A divalent metal cation is required as a cofactor.

It is found in the cytoplasm. The enzyme catalyses N(7)-methyl-GTP + H2O = N(7)-methyl-GMP + diphosphate + H(+). Nucleoside triphosphate pyrophosphatase that hydrolyzes 7-methyl-GTP (m(7)GTP). May have a dual role in cell division arrest and in preventing the incorporation of modified nucleotides into cellular nucleic acids. This chain is 7-methyl-GTP pyrophosphatase (yceF), found in Shigella flexneri.